We begin with the raw amino-acid sequence, 419 residues long: Probable serine/threonine-protein kinase DDB_G0290859 (419 aa).

A Protein kinase domain is found at 40–387 (YDIISTIGSG…ASTIKKHPFF (348 aa)). Residues 46–54 (IGSGSYGEV) and Lys69 contribute to the ATP site. The active-site Proton acceptor is Asp173. Residues 388 to 419 (EGINWEEMANFNVEPPFKPTLSSDDDISYFTN) enclose the AGC-kinase C-terminal domain.

This sequence belongs to the protein kinase superfamily. AGC Ser/Thr protein kinase family.

The catalysed reaction is L-seryl-[protein] + ATP = O-phospho-L-seryl-[protein] + ADP + H(+). It carries out the reaction L-threonyl-[protein] + ATP = O-phospho-L-threonyl-[protein] + ADP + H(+). The chain is Probable serine/threonine-protein kinase DDB_G0290859 from Dictyostelium discoideum (Social amoeba).